The primary structure comprises 315 residues: L-lactate dehydrogenase (315 aa).

Residues V12, D33, and Y65 each contribute to the NAD(+) site. Residues Q82, R88, and 120–123 each bind substrate; that span reads NPVD. NAD(+) is bound by residues 118–120 and S143; that span reads ISN. Residue 148 to 151 coordinates substrate; that stretch reads DTSR. Positions 153 and 168 each coordinate beta-D-fructose 1,6-bisphosphate. H175 (proton acceptor) is an active-site residue. Y219 carries the post-translational modification Phosphotyrosine. T228 contacts substrate.

It belongs to the LDH/MDH superfamily. LDH family. As to quaternary structure, homotetramer.

The protein localises to the cytoplasm. It carries out the reaction (S)-lactate + NAD(+) = pyruvate + NADH + H(+). Its pathway is fermentation; pyruvate fermentation to lactate; (S)-lactate from pyruvate: step 1/1. Its activity is regulated as follows. Allosterically activated by fructose 1,6-bisphosphate (FBP). Catalyzes the conversion of lactate to pyruvate. The polypeptide is L-lactate dehydrogenase (Mycoplasmopsis pulmonis (strain UAB CTIP) (Mycoplasma pulmonis)).